The primary structure comprises 449 residues: UDP-N-acetylmuramoylalanine--D-glutamate ligase (449 aa).

113–119 (GTNGKTT) contributes to the ATP binding site.

The protein belongs to the MurCDEF family.

The protein resides in the cytoplasm. It catalyses the reaction UDP-N-acetyl-alpha-D-muramoyl-L-alanine + D-glutamate + ATP = UDP-N-acetyl-alpha-D-muramoyl-L-alanyl-D-glutamate + ADP + phosphate + H(+). Its pathway is cell wall biogenesis; peptidoglycan biosynthesis. In terms of biological role, cell wall formation. Catalyzes the addition of glutamate to the nucleotide precursor UDP-N-acetylmuramoyl-L-alanine (UMA). This is UDP-N-acetylmuramoylalanine--D-glutamate ligase from Microcystis aeruginosa (strain NIES-843 / IAM M-2473).